Consider the following 329-residue polypeptide: MDPTTPAWGTESTTMNGNDQALPLFCGKETLISVFLILFIALVGLVGNGFVLWLLGFRMRKNAFSVYVLSLAGADFLFLCFQIINCLVYLSNVFCSISINFPSFFITVMTCAYLAGLSMLSTISTERCLSVLWPIWYRCRRPRHLSAVACVLLWALSLLLSILEGKFCGLFGDGDSGWCQTFDLITAAWLIFLFMVLCGSSLALLVRILCGSRGLPLTRLYLTILLTVLVFLLCGLPFGIQWFLILWIWKNSDVLFCHIHPVSVVLSSLNSSANPIIYFFVGSFRKQWRLQQPILKLALQRALQDIAEVDHSEGCFRQGTPEMSRSSLV.

The Extracellular portion of the chain corresponds to 1-33; the sequence is MDPTTPAWGTESTTMNGNDQALPLFCGKETLIS. A helical membrane pass occupies residues 34 to 54; it reads VFLILFIALVGLVGNGFVLWL. Topologically, residues 55-63 are cytoplasmic; the sequence is LGFRMRKNA. Residues 64 to 84 form a helical membrane-spanning segment; it reads FSVYVLSLAGADFLFLCFQII. Residues 85-96 lie on the Extracellular side of the membrane; it reads NCLVYLSNVFCS. Residues 97–117 traverse the membrane as a helical segment; that stretch reads ISINFPSFFITVMTCAYLAGL. Topologically, residues 118 to 144 are cytoplasmic; sequence SMLSTISTERCLSVLWPIWYRCRRPRH. Residues 145–165 form a helical membrane-spanning segment; sequence LSAVACVLLWALSLLLSILEG. Residues 166-183 are Extracellular-facing; sequence KFCGLFGDGDSGWCQTFD. Residues 184 to 204 traverse the membrane as a helical segment; it reads LITAAWLIFLFMVLCGSSLAL. The Cytoplasmic portion of the chain corresponds to 205-227; that stretch reads LVRILCGSRGLPLTRLYLTILLT. A helical transmembrane segment spans residues 228–248; it reads VLVFLLCGLPFGIQWFLILWI. Topologically, residues 249–263 are extracellular; that stretch reads WKNSDVLFCHIHPVS. Residues 264-284 form a helical membrane-spanning segment; the sequence is VVLSSLNSSANPIIYFFVGSF. Residues 285–329 are Cytoplasmic-facing; the sequence is RKQWRLQQPILKLALQRALQDIAEVDHSEGCFRQGTPEMSRSSLV.

It belongs to the G-protein coupled receptor 1 family. Mas subfamily.

Its subcellular location is the cell membrane. In terms of biological role, mast cell-specific receptor for basic secretagogues, i.e. cationic amphiphilic drugs, as well as endo- or exogenous peptides, consisting of a basic head group and a hydrophobic core. Recognizes and binds small molecules containing a cyclized tetrahydroisoquinoline (THIQ), such as non-steroidal neuromuscular blocking drugs (NMBDs), including tubocurarine and atracurium. In response to these compounds, mediates pseudo-allergic reactions characterized by histamine release, inflammation and airway contraction. This chain is Mas-related G-protein coupled receptor member X2 (MRGPRX2), found in Pan troglodytes (Chimpanzee).